Here is a 148-residue protein sequence, read N- to C-terminus: MARPTKFRRVEFFPEDDYFVPCGKPKCQIEEIALKVEELEAMRLKDIEELNQEECAEKMQVSRQTFQNIIDSARKKVVTALTEGKAIRISGGHYTTKLCKFKCAECETIYEINYDQDRAVCPSCGSDKVMCNKKAGFCKNWCKGNNIE.

Belongs to the UPF0251 family.

The sequence is that of UPF0251 protein Cbei_2962 from Clostridium beijerinckii (strain ATCC 51743 / NCIMB 8052) (Clostridium acetobutylicum).